Consider the following 301-residue polypeptide: tRNA uridine(34) hydroxylase (301 aa).

The Rhodanese domain maps to 121–215 (RSDDVVLIDT…YLEEVPAENS (95 aa)). Residue cysteine 175 is the Cysteine persulfide intermediate of the active site.

This sequence belongs to the TrhO family.

The catalysed reaction is uridine(34) in tRNA + AH2 + O2 = 5-hydroxyuridine(34) in tRNA + A + H2O. Catalyzes oxygen-dependent 5-hydroxyuridine (ho5U) modification at position 34 in tRNAs. In Ruegeria pomeroyi (strain ATCC 700808 / DSM 15171 / DSS-3) (Silicibacter pomeroyi), this protein is tRNA uridine(34) hydroxylase.